A 185-amino-acid chain; its full sequence is Elongation factor P (185 aa).

The protein belongs to the elongation factor P family.

It is found in the cytoplasm. Its pathway is protein biosynthesis; polypeptide chain elongation. Involved in peptide bond synthesis. Stimulates efficient translation and peptide-bond synthesis on native or reconstituted 70S ribosomes in vitro. Probably functions indirectly by altering the affinity of the ribosome for aminoacyl-tRNA, thus increasing their reactivity as acceptors for peptidyl transferase. The protein is Elongation factor P of Salinispora arenicola (strain CNS-205).